Here is a 397-residue protein sequence, read N- to C-terminus: Flavohemoprotein (397 aa).

Residues 4–140 (SFSPHTITLI…IANLLKDREA (137 aa)) enclose the Globin domain. His-87 is a heme b binding site. Residues Tyr-97 and Glu-139 each act as charge relay system in the active site. Residues 151–397 (GGWIHWRRFV…FGPMDEEMAA (247 aa)) form a reductase region. The FAD-binding FR-type domain occupies 154–258 (IHWRRFVISK…TPPVGDFFLP (105 aa)). Residues Tyr-192 and 207–210 (RNYS) each bind FAD. 271-276 (GVGLTP) contacts NADP(+). 387-390 (FFGP) provides a ligand contact to FAD.

The protein belongs to the globin family. Two-domain flavohemoproteins subfamily. In the C-terminal section; belongs to the flavoprotein pyridine nucleotide cytochrome reductase family. It depends on heme b as a cofactor. FAD is required as a cofactor.

The enzyme catalyses 2 nitric oxide + NADPH + 2 O2 = 2 nitrate + NADP(+) + H(+). It carries out the reaction 2 nitric oxide + NADH + 2 O2 = 2 nitrate + NAD(+) + H(+). In terms of biological role, is involved in NO detoxification in an aerobic process, termed nitric oxide dioxygenase (NOD) reaction that utilizes O(2) and NAD(P)H to convert NO to nitrate, which protects the bacterium from various noxious nitrogen compounds. Therefore, plays a central role in the inducible response to nitrosative stress. In Xylella fastidiosa (strain Temecula1 / ATCC 700964), this protein is Flavohemoprotein.